We begin with the raw amino-acid sequence, 328 residues long: RNA 3'-terminal phosphate cyclase (328 aa).

ATP is bound by residues Gln100 and 276 to 280; that span reads HLADQ. The Tele-AMP-histidine intermediate role is filled by His302.

It belongs to the RNA 3'-terminal cyclase family. Type 1 subfamily.

It localises to the cytoplasm. It catalyses the reaction a 3'-end 3'-phospho-ribonucleotide-RNA + ATP = a 3'-end 2',3'-cyclophospho-ribonucleotide-RNA + AMP + diphosphate. Its function is as follows. Catalyzes the conversion of 3'-phosphate to a 2',3'-cyclic phosphodiester at the end of RNA. The mechanism of action of the enzyme occurs in 3 steps: (A) adenylation of the enzyme by ATP; (B) transfer of adenylate to an RNA-N3'P to produce RNA-N3'PP5'A; (C) and attack of the adjacent 2'-hydroxyl on the 3'-phosphorus in the diester linkage to produce the cyclic end product. The biological role of this enzyme is unknown but it is likely to function in some aspects of cellular RNA processing. This chain is RNA 3'-terminal phosphate cyclase (rtcA), found in Archaeoglobus fulgidus (strain ATCC 49558 / DSM 4304 / JCM 9628 / NBRC 100126 / VC-16).